A 166-amino-acid polypeptide reads, in one-letter code: NAD(P)H-quinone oxidoreductase subunit I, chloroplastic (166 aa).

4Fe-4S ferredoxin-type domains follow at residues 55-84 (GRIHFEFDKCIACEVCVRVCPIDLPVVDWK) and 95-124 (LNYSIDFGICIFCGNCVEYCPTNCLSMTEE). [4Fe-4S] cluster-binding residues include Cys64, Cys67, Cys70, Cys74, Cys104, Cys107, Cys110, and Cys114.

Belongs to the complex I 23 kDa subunit family. In terms of assembly, NDH is composed of at least 16 different subunits, 5 of which are encoded in the nucleus. Requires [4Fe-4S] cluster as cofactor.

It localises to the plastid. Its subcellular location is the chloroplast thylakoid membrane. The enzyme catalyses a plastoquinone + NADH + (n+1) H(+)(in) = a plastoquinol + NAD(+) + n H(+)(out). It carries out the reaction a plastoquinone + NADPH + (n+1) H(+)(in) = a plastoquinol + NADP(+) + n H(+)(out). NDH shuttles electrons from NAD(P)H:plastoquinone, via FMN and iron-sulfur (Fe-S) centers, to quinones in the photosynthetic chain and possibly in a chloroplast respiratory chain. The immediate electron acceptor for the enzyme in this species is believed to be plastoquinone. Couples the redox reaction to proton translocation, and thus conserves the redox energy in a proton gradient. The polypeptide is NAD(P)H-quinone oxidoreductase subunit I, chloroplastic (Pericome caudata (Mountain tail-leaf)).